We begin with the raw amino-acid sequence, 219 residues long: Adenylate kinase (219 aa).

10–15 (GAGKGT) is a binding site for ATP. The NMP stretch occupies residues 30-59 (STGDMLRVAVKVGTPLGIEAKKIMDSGGLV). Residues threonine 31, arginine 36, 57 to 59 (GLV), 85 to 88 (GFPR), and glutamine 92 contribute to the AMP site. Residues 122-159 (GRRTHLKSGRTYHITYNQPKVEGIDDITGEKLVQRSDD) form an LID region. ATP contacts are provided by residues arginine 123 and 132-133 (TY). Residues arginine 156 and arginine 167 each coordinate AMP. Glycine 202 provides a ligand contact to ATP.

Belongs to the adenylate kinase family. Monomer.

The protein resides in the cytoplasm. It catalyses the reaction AMP + ATP = 2 ADP. It functions in the pathway purine metabolism; AMP biosynthesis via salvage pathway; AMP from ADP: step 1/1. Its function is as follows. Catalyzes the reversible transfer of the terminal phosphate group between ATP and AMP. Plays an important role in cellular energy homeostasis and in adenine nucleotide metabolism. The chain is Adenylate kinase from Vesicomyosocius okutanii subsp. Calyptogena okutanii (strain HA).